We begin with the raw amino-acid sequence, 142 residues long: Hemoglobin subunit alpha (142 aa).

The 141-residue stretch at 2–142 (VLSPADKSNV…VSTVLTSKYR (141 aa)) folds into the Globin domain. A Phosphoserine modification is found at S4. N6-succinyllysine is present on residues K8 and K12. The residue at position 17 (K17) is an N6-acetyllysine; alternate. The residue at position 17 (K17) is an N6-succinyllysine; alternate. At Y25 the chain carries Phosphotyrosine. S36 carries the phosphoserine modification. K41 is modified (N6-succinyllysine). A Phosphoserine modification is found at S50. Residue H59 coordinates O2. A heme b-binding site is contributed by H88. S103 bears the Phosphoserine mark. Position 109 is a phosphothreonine (T109). 2 positions are modified to phosphoserine: S125 and S132. T135 and T138 each carry phosphothreonine. Position 139 is a phosphoserine (S139).

This sequence belongs to the globin family. In terms of assembly, heterotetramer of two alpha chains and two beta chains. As to expression, red blood cells.

Functionally, involved in oxygen transport from the lung to the various peripheral tissues. In terms of biological role, hemopressin acts as an antagonist peptide of the cannabinoid receptor CNR1. Hemopressin-binding efficiently blocks cannabinoid receptor CNR1 and subsequent signaling. The protein is Hemoglobin subunit alpha (HBA) of Macaca fuscata fuscata (Japanese macaque).